A 732-amino-acid chain; its full sequence is 1,4-alpha-glucan branching enzyme GlgB (732 aa).

The Nucleophile role is filled by Asp409. The Proton donor role is filled by Glu462.

The protein belongs to the glycosyl hydrolase 13 family. GlgB subfamily. As to quaternary structure, monomer.

It carries out the reaction Transfers a segment of a (1-&gt;4)-alpha-D-glucan chain to a primary hydroxy group in a similar glucan chain.. The protein operates within glycan biosynthesis; glycogen biosynthesis. Catalyzes the formation of the alpha-1,6-glucosidic linkages in glycogen by scission of a 1,4-alpha-linked oligosaccharide from growing alpha-1,4-glucan chains and the subsequent attachment of the oligosaccharide to the alpha-1,6 position. This Corynebacterium diphtheriae (strain ATCC 700971 / NCTC 13129 / Biotype gravis) protein is 1,4-alpha-glucan branching enzyme GlgB.